The following is a 1266-amino-acid chain: Kinesin-like protein KIN-12G (1266 aa).

The tract at residues 1-22 (MPSDCGDDDHGGGSAPAGFELQ) is disordered. Positions 32–369 (NVQVVIRVRP…LKFAQRAKYI (338 aa)) constitute a Kinesin motor domain. Residue 113 to 120 (GQTGSGKT) participates in ATP binding. Coiled-coil stretches lie at residues 613–668 (MEFI…SEAV), 817–854 (RSELTDLQLQLDEMHEENDKLMGLYEKAMQERDEFKRK), 1029–1060 (ARESETALRSKIDGLKVKLRSFEAQRKEAERV), and 1084–1120 (SELLRSEEERTKLLSELKKSREQLIMVQKEIKSMNRH).

The protein belongs to the TRAFAC class myosin-kinesin ATPase superfamily. Kinesin family. KIN-12 subfamily.

In Oryza sativa subsp. japonica (Rice), this protein is Kinesin-like protein KIN-12G.